Here is a 167-residue protein sequence, read N- to C-terminus: Transmembrane protein 229B (167 aa).

The Cytoplasmic segment spans residues 1–14 (MASAEPLTALSRWY). Residues 15 to 35 (LYAIHGYFCEVMFTAAWEFVV) form a helical membrane-spanning segment. Over 36-40 (NFNWK) the chain is Extracellular. The helical transmembrane segment at 41–61 (FPGVTSVWALFIYGTSILIVE) threads the bilayer. The Cytoplasmic portion of the chain corresponds to 62-73 (RMYLRLRGRCPL). Residues 74–94 (LVRCVIYTLWTYLWEFTTGFI) traverse the membrane as a helical segment. Residues 95–109 (LRQFNACPWDYSQFD) are Extracellular-facing. Residues 110 to 130 (FDFMGLITLEYAVPWFCGALI) form a helical membrane-spanning segment. Residues 131–167 (MEQFIIRNTLRLRFDKDAEPGEPASPPALANGHVKTD) are Cytoplasmic-facing. Residues 148–167 (AEPGEPASPPALANGHVKTD) are disordered.

It belongs to the TMEM229 family.

Its subcellular location is the membrane. The sequence is that of Transmembrane protein 229B (TMEM229B) from Mus musculus (Mouse).